We begin with the raw amino-acid sequence, 949 residues long: Glycine dehydrogenase (decarboxylating) (949 aa).

At Lys-704 the chain carries N6-(pyridoxal phosphate)lysine.

It belongs to the GcvP family. In terms of assembly, the glycine cleavage system is composed of four proteins: P, T, L and H. Requires pyridoxal 5'-phosphate as cofactor.

The enzyme catalyses N(6)-[(R)-lipoyl]-L-lysyl-[glycine-cleavage complex H protein] + glycine + H(+) = N(6)-[(R)-S(8)-aminomethyldihydrolipoyl]-L-lysyl-[glycine-cleavage complex H protein] + CO2. The glycine cleavage system catalyzes the degradation of glycine. The P protein binds the alpha-amino group of glycine through its pyridoxal phosphate cofactor; CO(2) is released and the remaining methylamine moiety is then transferred to the lipoamide cofactor of the H protein. The sequence is that of Glycine dehydrogenase (decarboxylating) from Bacteroides fragilis (strain YCH46).